The sequence spans 330 residues: Inactive hydroxysteroid dehydrogenase-like protein 1 (330 aa).

Ala-2 carries the post-translational modification N-acetylalanine. Residues Ala-2–Ala-82 form a required for mitochondria translocation region. NADP(+)-binding positions include Gly-74 to Gly-80, Asp-125, and Lys-222.

This sequence belongs to the short-chain dehydrogenases/reductases (SDR) family. 17-beta-HSD 3 subfamily. Interacts with STYXL1. As to expression, highly expressed in testis and ovary. Also detected in thyroid, spinal cord, adrenal gland, heart, placenta, skeletal muscle, small intestine, colon, spleen, prostate and pancreas.

It localises to the mitochondrion. The polypeptide is Inactive hydroxysteroid dehydrogenase-like protein 1 (HSDL1) (Homo sapiens (Human)).